Here is a 967-residue protein sequence, read N- to C-terminus: Cytosolic carboxypeptidase 2 (967 aa).

One can recognise a Peptidase M14 domain in the interval 330–601 (YPYTYSDLQR…HFCDTLLDYC (272 aa)). Zn(2+) contacts are provided by His-396, Glu-399, and His-492. Glu-565 acts as the Proton donor/acceptor in catalysis. Disordered stretches follow at residues 679–706 (KRRLRSRKERNSLYQKRNARQKQKLHEA) and 944–967 (PGISSSEPHFPNSSEDITVRNTMK). Residues 946–967 (ISSSEPHFPNSSEDITVRNTMK) show a composition bias toward polar residues.

This sequence belongs to the peptidase M14 family. Zn(2+) is required as a cofactor.

The protein localises to the cytoplasm. The protein resides in the cytosol. It is found in the cytoskeleton. It localises to the microtubule organizing center. Its subcellular location is the centrosome. The protein localises to the centriole. The protein resides in the cilium basal body. It carries out the reaction (L-glutamyl)(n+1)-gamma-L-glutamyl-L-glutamyl-[protein] + H2O = (L-glutamyl)(n)-gamma-L-glutamyl-L-glutamyl-[protein] + L-glutamate. Its function is as follows. Metallocarboxypeptidase that mediates deglutamylation of target proteins. Catalyzes the deglutamylation of polyglutamate side chains generated by post-translational polyglutamylation in proteins such as tubulins. Also removes gene-encoded polyglutamates from the carboxy-terminus of target proteins such as MYLK. Does not show detyrosinase or deglycylase activities from the carboxy-terminus of tubulin. Functionally, metallocarboxypeptidase that mediates deglutamylation of tubulin and non-tubulin target proteins. Catalyzes the removal of polyglutamate side chains present on the gamma-carboxyl group of glutamate residues within the C-terminal tail of tubulin protein. Specifically cleaves tubulin long-side-chains, while it is not able to remove the branching point glutamate. Also catalyzes the removal of polyglutamate residues from the carboxy-terminus of non-tubulin proteins. This chain is Cytosolic carboxypeptidase 2 (agbl2), found in Xenopus tropicalis (Western clawed frog).